Reading from the N-terminus, the 166-residue chain is Kelch repeat protein B10 (166 aa).

Kelch repeat units lie at residues T25–G76 and M77–N129.

It belongs to the poxviruses Kelch family.

This is Kelch repeat protein B10 from Oryctolagus cuniculus (Rabbit).